A 264-amino-acid chain; its full sequence is uncharacterized protein (264 aa).

The stretch at Ala19–Asn45 forms a coiled coil.

This is an uncharacterized protein from Acanthamoeba polyphaga mimivirus (APMV).